The chain runs to 347 residues: Putative GDP-L-fucose synthase 2 (347 aa).

The tract at residues 1-20 (MPSQQRSSSGSTAKAGDADG) is disordered. Residue 41–47 (GHRGMVG) participates in NADP(+) binding. The Proton donor/acceptor role is filled by Tyr-168. NADP(+) is bound by residues Lys-172, 195–198 (PNNL), and His-211. Substrate-binding residues include Arg-219, Trp-234, Arg-241, and Glu-301.

It belongs to the NAD(P)-dependent epimerase/dehydratase family. Fucose synthase subfamily. Homodimer.

The catalysed reaction is GDP-beta-L-fucose + NADP(+) = GDP-4-dehydro-alpha-D-rhamnose + NADPH + H(+). It functions in the pathway nucleotide-sugar biosynthesis; GDP-L-fucose biosynthesis via de novo pathway; GDP-L-fucose from GDP-alpha-D-mannose: step 2/2. Its function is as follows. Catalyzes the two-step NADP-dependent conversion of GDP-4-dehydro-6-deoxy-D-mannose to GDP-fucose, involving an epimerase and a reductase reaction. The protein is Putative GDP-L-fucose synthase 2 of Oryza sativa subsp. japonica (Rice).